Here is a 163-residue protein sequence, read N- to C-terminus: Phosphopantetheine adenylyltransferase (163 aa).

Residue Ser-9 participates in substrate binding. Residues 9–10 (SF) and His-17 each bind ATP. Substrate is bound by residues Lys-41, Thr-73, and Arg-87. Residues 88 to 90 (GLR), Glu-98, and 123 to 129 (YSFISSG) contribute to the ATP site.

Belongs to the bacterial CoaD family. In terms of assembly, homohexamer. Requires Mg(2+) as cofactor.

The protein localises to the cytoplasm. It catalyses the reaction (R)-4'-phosphopantetheine + ATP + H(+) = 3'-dephospho-CoA + diphosphate. The protein operates within cofactor biosynthesis; coenzyme A biosynthesis; CoA from (R)-pantothenate: step 4/5. Functionally, reversibly transfers an adenylyl group from ATP to 4'-phosphopantetheine, yielding dephospho-CoA (dPCoA) and pyrophosphate. In Desulforudis audaxviator (strain MP104C), this protein is Phosphopantetheine adenylyltransferase.